The chain runs to 409 residues: Probable tRNA pseudouridine synthase D (409 aa).

Catalysis depends on Asp73, which acts as the Nucleophile. The TRUD domain occupies 146–365; it reads GFPNFFGDQR…SSGDRRIISA (220 aa).

The protein belongs to the pseudouridine synthase TruD family.

It catalyses the reaction uridine(13) in tRNA = pseudouridine(13) in tRNA. Its function is as follows. Could be responsible for synthesis of pseudouridine from uracil-13 in transfer RNAs. This chain is Probable tRNA pseudouridine synthase D, found in Thermoplasma volcanium (strain ATCC 51530 / DSM 4299 / JCM 9571 / NBRC 15438 / GSS1).